A 331-amino-acid chain; its full sequence is Adenosine deaminase (331 aa).

His12 and His14 together coordinate Zn(2+). Substrate is bound by residues His14, Asp16, and Gly170. His197 provides a ligand contact to Zn(2+). Residue Glu200 is the Proton donor of the active site. Asp278 is a Zn(2+) binding site.

It belongs to the metallo-dependent hydrolases superfamily. Adenosine and AMP deaminases family. Adenosine deaminase subfamily. Requires Zn(2+) as cofactor.

It carries out the reaction adenosine + H2O + H(+) = inosine + NH4(+). The enzyme catalyses 2'-deoxyadenosine + H2O + H(+) = 2'-deoxyinosine + NH4(+). In terms of biological role, catalyzes the hydrolytic deamination of adenosine and 2-deoxyadenosine. This Vibrio vulnificus (strain YJ016) protein is Adenosine deaminase.